Consider the following 279-residue polypeptide: 3-methyl-2-oxobutanoate hydroxymethyltransferase (279 aa).

Mg(2+)-binding residues include Asp44 and Asp83. Residues 44–45 (DS), Asp83, and Lys113 each bind 3-methyl-2-oxobutanoate. Glu115 contributes to the Mg(2+) binding site. Glu182 (proton acceptor) is an active-site residue.

This sequence belongs to the PanB family. Homodecamer; pentamer of dimers. Requires Mg(2+) as cofactor.

The protein localises to the cytoplasm. It catalyses the reaction 3-methyl-2-oxobutanoate + (6R)-5,10-methylene-5,6,7,8-tetrahydrofolate + H2O = 2-dehydropantoate + (6S)-5,6,7,8-tetrahydrofolate. It functions in the pathway cofactor biosynthesis; (R)-pantothenate biosynthesis; (R)-pantoate from 3-methyl-2-oxobutanoate: step 1/2. Catalyzes the reversible reaction in which hydroxymethyl group from 5,10-methylenetetrahydrofolate is transferred onto alpha-ketoisovalerate to form ketopantoate. The chain is 3-methyl-2-oxobutanoate hydroxymethyltransferase from Dehalococcoides mccartyi (strain CBDB1).